The chain runs to 479 residues: MNRNPDQNTLPNITLKIIETYLGRVPSVNEYHMLKLQARNIQKITVFNKDIFVSLVKKNKKRFFFDVDTSASEIKDRILSYFSKQTQTYNIGKLFTIIELQSVLVTTYTDILGVLTIKAPNVISSKISYNVTSMEELARDMLNSMNVAVIDKAKVMGRHNVSSLVKNVNKLMEEYLRRHNKSCICYGSYSLYLINPNIRYGDIDILQTNSRTFLIDLAFLIKFITGNNIILSKIPYLRNYMVIKDENDNHIIDSFNIRQDTMNIVPKIFIDNIYIVDPTFQLLNMIKMFSQIDRLEDLSKDPEKFNVRMATMLEYVRYTHGIVFDGTRNNMPMKCIIDENNRIVTVTTKDYFSFKKCLVYLDENVLSSDILDLNADTSCDFESVTNSVYLIHDNIMYTYFSNTILLSDKGKVHEISARGLCAHILLYQMLTSGEYKQCLSDLLNSMMNRDKIPIYSHTERDKKPGRHGFINIEKDIIVF.

Catalysis depends on residues Asp202 and Asp204. Ca(2+) is bound by residues Asp202, Asp204, and Asp253.

Belongs to the poxviridae poly(A) polymerase catalytic subunit family. As to quaternary structure, heterodimer of a large (catalytic) subunit and a small (regulatory) subunit.

The catalysed reaction is RNA(n) + ATP = RNA(n)-3'-adenine ribonucleotide + diphosphate. In terms of biological role, polymerase that creates the 3'-poly(A) tail of mRNA's. The sequence is that of Poly(A) polymerase catalytic subunit (OPG063) from Cynomys gunnisoni (Gunnison's prairie dog).